The primary structure comprises 449 residues: tRNA-2-methylthio-N(6)-dimethylallyladenosine synthase (449 aa).

The 116-residue stretch at 13–128 folds into the MTTase N-terminal domain; sequence RRIFIETYGC…LPHLIGTVEK (116 aa). The [4Fe-4S] cluster site is built by Cys-22, Cys-58, Cys-92, Cys-166, Cys-170, and Cys-173. Residues 152-383 enclose the Radical SAM core domain; the sequence is SRIKISGFIS…ITLQLKISLM (232 aa). In terms of domain architecture, TRAM spans 386 to 449; that stretch reads KENIGKTMEI…AATLFGDPKL (64 aa).

It belongs to the methylthiotransferase family. MiaB subfamily. In terms of assembly, monomer. [4Fe-4S] cluster is required as a cofactor.

It localises to the cytoplasm. It catalyses the reaction N(6)-dimethylallyladenosine(37) in tRNA + (sulfur carrier)-SH + AH2 + 2 S-adenosyl-L-methionine = 2-methylsulfanyl-N(6)-dimethylallyladenosine(37) in tRNA + (sulfur carrier)-H + 5'-deoxyadenosine + L-methionine + A + S-adenosyl-L-homocysteine + 2 H(+). Functionally, catalyzes the methylthiolation of N6-(dimethylallyl)adenosine (i(6)A), leading to the formation of 2-methylthio-N6-(dimethylallyl)adenosine (ms(2)i(6)A) at position 37 in tRNAs that read codons beginning with uridine. The sequence is that of tRNA-2-methylthio-N(6)-dimethylallyladenosine synthase from Azobacteroides pseudotrichonymphae genomovar. CFP2.